We begin with the raw amino-acid sequence, 176 residues long: ATP-dependent protease subunit HslV (176 aa).

T2 is an active-site residue. Residues G157, C160, and T163 each contribute to the Na(+) site.

It belongs to the peptidase T1B family. HslV subfamily. In terms of assembly, a double ring-shaped homohexamer of HslV is capped on each side by a ring-shaped HslU homohexamer. The assembly of the HslU/HslV complex is dependent on binding of ATP.

Its subcellular location is the cytoplasm. It carries out the reaction ATP-dependent cleavage of peptide bonds with broad specificity.. Allosterically activated by HslU binding. Its function is as follows. Protease subunit of a proteasome-like degradation complex believed to be a general protein degrading machinery. This is ATP-dependent protease subunit HslV from Pseudomonas entomophila (strain L48).